The following is a 115-amino-acid chain: NADH-ubiquinone oxidoreductase chain 3 (115 aa).

Helical transmembrane passes span 4–24 (LMALMVNITLSILLITVAFWL), 55–75 (FFLVAITFLLYDLEIALLLPL), and 86–106 (TMMLTAFILVSVLALGLAYEW).

The protein belongs to the complex I subunit 3 family. Core subunit of respiratory chain NADH dehydrogenase (Complex I) which is composed of 45 different subunits. Interacts with TMEM186. Interacts with TMEM242.

The protein resides in the mitochondrion inner membrane. The enzyme catalyses a ubiquinone + NADH + 5 H(+)(in) = a ubiquinol + NAD(+) + 4 H(+)(out). Its function is as follows. Core subunit of the mitochondrial membrane respiratory chain NADH dehydrogenase (Complex I) which catalyzes electron transfer from NADH through the respiratory chain, using ubiquinone as an electron acceptor. Essential for the catalytic activity of complex I. In Peromyscus gossypinus (Cotton deermouse), this protein is NADH-ubiquinone oxidoreductase chain 3.